Here is a 137-residue protein sequence, read N- to C-terminus: Phosphomevalonate dehydratase small subunit (137 aa).

Residue serine 62 is the Proton acceptor of the active site.

The protein belongs to the AcnX type II small subunit family. As to quaternary structure, heterodimer composed of a large subunit (PMDh-L) and a small subunit (PMDh-S).

The catalysed reaction is (R)-5-phosphomevalonate = (2E)-3-methyl-5-phosphooxypent-2-enoate + H2O. It functions in the pathway isoprenoid biosynthesis; isopentenyl diphosphate biosynthesis via mevalonate pathway. Component of a hydro-lyase that catalyzes the dehydration of mevalonate 5-phosphate (MVA5P) to form trans-anhydromevalonate 5-phosphate (tAHMP). Involved in the archaeal mevalonate (MVA) pathway, which provides fundamental precursors for isoprenoid biosynthesis, such as isopentenyl diphosphate (IPP) and dimethylallyl diphosphate (DMAPP). This chain is Phosphomevalonate dehydratase small subunit, found in Methanothrix thermoacetophila (strain DSM 6194 / JCM 14653 / NBRC 101360 / PT) (Methanosaeta thermophila).